The following is a 538-amino-acid chain: MASRSLASISRSASRLLQSNVQKCALPAASIRLSSNNVESKKGIHTGVATQQAAAATKVSAKATAANASGRIVAVIGAVVDVQFDENLPPILNGLEVVGRSPRLILEVSQHLGDNVVRCIAMDGTEGLVRGQPVADTGDPIKIPVGPETLGRIMNVIGEPIDERGPIASKNFAAIHAEAPEFVEMSVEQEILVTGIKVVDLLAPYAKGGKIGLFGGAGVGKTVLIMELINNVAKAHGGYSVFAGVGERTREGNDLYHEMIEGGVIDLKGKNSKVSLVYGQMNEPPGARARVCLTGLTVAEYFRDQEGQDVLLFIDNIFRFTQAGSEVSALLGRIPSAVGYQPTLATDMGSMQERITTTKKGSITSVQAIYVPADDLTDPAPATTFAHLDATTVLSRGIAELAIYPAVDPLDSTSRIMDPNVVGQNHYDIARGVQKILQDYKSLQDIIAILGMDELSEEDKLTVSRARKIQRFLSQPFQVAEVFTGHQGKFVSLEETIRGFTMILKGELDHLPEVAFYMQGGIDDVFKKAEELAKQHGN.

215–222 (GGAGVGKT) contributes to the ATP binding site.

Belongs to the ATPase alpha/beta chains family. Subunit of the F-type ATPase which has 2 components, CF(1) - the catalytic core - and CF(0) - the membrane proton channel. Interacts (via N-terminus) with lov-1 (via PLAT domain). In terms of tissue distribution, expressed in three categories of adult male sensory neurons: tail ray B neurons, HOB hook neuron and head cephalic (CEM) neurons.

The protein localises to the cell projection. It is found in the cilium. It localises to the mitochondrion. Its subcellular location is the mitochondrion inner membrane. The enzyme catalyses ATP + H2O + 4 H(+)(in) = ADP + phosphate + 5 H(+)(out). Its function is as follows. Mitochondrial membrane ATP synthase (F(1)F(0) ATP synthase or Complex V) produces ATP from ADP in the presence of a proton gradient across the membrane which is generated by electron transport complexes of the respiratory chain. F-type ATPases consist of two structural domains, F(1) - containing the extramembraneous catalytic core, and F(0) - containing the membrane proton channel, linked together by a central stalk and a peripheral stalk. During catalysis, ATP synthesis in the catalytic domain of F(1) is coupled via a rotary mechanism of the central stalk subunits to proton translocation. Subunits alpha and beta form the catalytic core in F(1). Rotation of the central stalk against the surrounding subunits leads to hydrolysis of ATP in three separate catalytic sites on the beta subunits. Required during male mating behavior for the response to hermaphrodite contact, acting with lov-1 and pkd-2. May be involved in polycystin signaling. The polypeptide is ATP synthase subunit beta, mitochondrial (Caenorhabditis elegans).